Here is a 689-residue protein sequence, read N- to C-terminus: Protein asunder (689 aa).

Residues 521–550 adopt a coiled-coil conformation; the sequence is NGARLKLSKAKDQYRLLYRELEQLIQLNAT. 2 disordered regions span residues 591-619 and 669-689; these read SPER…SKRR and KDAV…SVRS. The span at 599 to 614 shows a compositional bias: low complexity; it reads SSVGASGSSNSNSLLK. The Nuclear localization signal (NLS) signature appears at 613–619; the sequence is LKASKRR.

It belongs to the Integrator subunit 13 family. As to quaternary structure, belongs to the multiprotein complex Integrator, at least composed of IntS1, IntS2, IntS3, IntS4, omd/IntS5, IntS6, defl/IntS7, IntS8, IntS9, IntS10, IntS11, IntS12, asun/IntS13, IntS14 and IntS15. The core complex associates with protein phosphatase 2A subunits mts/PP2A and Pp2A-29B, to form the Integrator-PP2A (INTAC) complex. In terms of processing, phosphorylated.

The protein resides in the nucleus. The protein localises to the cytoplasm. Its subcellular location is the perinuclear region. Functionally, component of the integrator complex, a multiprotein complex that terminates RNA polymerase II (Pol II) transcription in the promoter-proximal region of genes. The integrator complex provides a quality checkpoint during transcription elongation by driving premature transcription termination of transcripts that are unfavorably configured for transcriptional elongation: the complex terminates transcription by (1) catalyzing dephosphorylation of the C-terminal domain (CTD) of Pol II subunit Polr2A/Rbp1 and Spt5, and (2) degrading the exiting nascent RNA transcript via endonuclease activity. The integrator complex is also involved in the 3'-end processing of the U7 snRNA, and also the spliceosomal snRNAs U1, U2, U4 and U5. This Drosophila simulans (Fruit fly) protein is Protein asunder (asun).